The sequence spans 433 residues: Poly(A) ribonuclease POP2 (433 aa).

At methionine 1 the chain carries N-acetylmethionine. A disordered region spans residues 78-98 (LLTQQQQQQQQQQQPFNIGTP). The segment covering 81–91 (QQQQQQQQQQQ) has biased composition (low complexity). The residue at position 97 (threonine 97) is a Phosphothreonine; by YAK1. Serine 188, glutamate 190, aspartate 310, and glutamine 394 together coordinate a divalent metal cation.

This sequence belongs to the CAF1 family. Subunit of the 1.0 MDa CCR4-NOT core complex that contains CCR4, CAF1, NOT1, NOT2, NOT3, NOT4, NOT5, CAF40 and CAF130. In the complex interacts with NOT1. The core complex probably is part of a less characterized 1.9 MDa CCR4-NOT complex. Requires Mg(2+) as cofactor.

Its subcellular location is the cytoplasm. It localises to the nucleus. It catalyses the reaction Exonucleolytic cleavage of poly(A) to 5'-AMP.. Functionally, acts as a probably catalytic component of the CCR4-NOT core complex, which in the nucleus seems to be a general transcription factor, and in the cytoplasm the major mRNA deadenylase involved in mRNA turnover. In vitro, POP2 has 3'-exoribonuclease activity with a preference for poly(A) RNAs, but also degrades poly(U) and poly(C) RNAs. Is part of a glucose-sensing system involved in growth control in response to glucose availability. The polypeptide is Poly(A) ribonuclease POP2 (POP2) (Saccharomyces cerevisiae (strain ATCC 204508 / S288c) (Baker's yeast)).